A 506-amino-acid chain; its full sequence is Maturase K (506 aa).

Belongs to the intron maturase 2 family. MatK subfamily.

The protein resides in the plastid. The protein localises to the chloroplast. Functionally, usually encoded in the trnK tRNA gene intron. Probably assists in splicing its own and other chloroplast group II introns. The chain is Maturase K from Prunus persica (Peach).